The primary structure comprises 100 residues: Large ribosomal subunit protein eL36B (100 aa).

It belongs to the eukaryotic ribosomal protein eL36 family. In terms of assembly, component of the large ribosomal subunit (LSU). Mature yeast ribosomes consist of a small (40S) and a large (60S) subunit. The 40S small subunit contains 1 molecule of ribosomal RNA (18S rRNA) and 33 different proteins (encoded by 57 genes). The large 60S subunit contains 3 rRNA molecules (25S, 5.8S and 5S rRNA) and 46 different proteins (encoded by 81 genes).

It localises to the cytoplasm. In terms of biological role, component of the ribosome, a large ribonucleoprotein complex responsible for the synthesis of proteins in the cell. The small ribosomal subunit (SSU) binds messenger RNAs (mRNAs) and translates the encoded message by selecting cognate aminoacyl-transfer RNA (tRNA) molecules. The large subunit (LSU) contains the ribosomal catalytic site termed the peptidyl transferase center (PTC), which catalyzes the formation of peptide bonds, thereby polymerizing the amino acids delivered by tRNAs into a polypeptide chain. The nascent polypeptides leave the ribosome through a tunnel in the LSU and interact with protein factors that function in enzymatic processing, targeting, and the membrane insertion of nascent chains at the exit of the ribosomal tunnel. The protein is Large ribosomal subunit protein eL36B of Saccharomyces cerevisiae (strain ATCC 204508 / S288c) (Baker's yeast).